A 296-amino-acid polypeptide reads, in one-letter code: Nucleotide-binding protein SZO_12220 (296 aa).

13–20 (GMSGAGKT) provides a ligand contact to ATP. 63-66 (DMRS) is a GTP binding site.

It belongs to the RapZ-like family.

In terms of biological role, displays ATPase and GTPase activities. The sequence is that of Nucleotide-binding protein SZO_12220 from Streptococcus equi subsp. zooepidemicus (strain H70).